The primary structure comprises 515 residues: Protein NRT1/ PTR FAMILY 4.1 (515 aa).

12 helical membrane passes run glycine 24 to alanine 44, phenylalanine 71 to threonine 91, phenylalanine 93 to glutamine 113, valine 134 to proline 154, leucine 168 to valine 188, phenylalanine 204 to methionine 224, phenylalanine 298 to methionine 318, isoleucine 339 to tyrosine 359, isoleucine 381 to lysine 401, isoleucine 413 to valine 433, alanine 461 to leucine 481, and leucine 492 to alanine 512.

Belongs to the major facilitator superfamily. Proton-dependent oligopeptide transporter (POT/PTR) (TC 2.A.17) family. As to expression, expressed in siliques and flowers.

It localises to the membrane. Functionally, involved in (+) and (-)-abscisic acid transport (ABA) and in gibberellin import. The sequence is that of Protein NRT1/ PTR FAMILY 4.1 (NPF4.1) from Arabidopsis thaliana (Mouse-ear cress).